The following is a 66-amino-acid chain: Large ribosomal subunit protein bL35 (66 aa).

The protein belongs to the bacterial ribosomal protein bL35 family.

The sequence is that of Large ribosomal subunit protein bL35 from Cereibacter sphaeroides (strain ATCC 17029 / ATH 2.4.9) (Rhodobacter sphaeroides).